The sequence spans 143 residues: Large ribosomal subunit protein uL11 (143 aa).

This sequence belongs to the universal ribosomal protein uL11 family. In terms of assembly, part of the ribosomal stalk of the 50S ribosomal subunit. Interacts with L10 and the large rRNA to form the base of the stalk. L10 forms an elongated spine to which L12 dimers bind in a sequential fashion forming a multimeric L10(L12)X complex. In terms of processing, one or more lysine residues are methylated.

In terms of biological role, forms part of the ribosomal stalk which helps the ribosome interact with GTP-bound translation factors. This is Large ribosomal subunit protein uL11 from Clavibacter michiganensis subsp. michiganensis (strain NCPPB 382).